The following is a 428-amino-acid chain: Divalent metal cation transporter MntH (428 aa).

The next 11 helical transmembrane spans lie at 33–53 (WYLLGPAFVAAIAYVDPGNVA), 60–80 (AQFGYLLLWVIVAANVMAALV), 114–134 (QAEIVAMATDVAEVIGGAIAL), 136–156 (IMFNLPLPIGGIITGVVSLLL), 171–191 (VITALLLVIAIGFTASFFVVT), 210–230 (SVLLAAAIMGATVMPHAVYLH), 258–278 (VGLAMLIAGGVNAAMLLVAAL), 299–319 (TLGATIAVLFAVGLLASGLAS), 334–356 (LLHWSVPMLVRRLITLGPALAIL), 365–385 (TLVLSQVVLSFGIPFAVLPLV), and 406–426 (VGWVVAVMVSLLNVMLIYLTV).

Belongs to the NRAMP family.

It localises to the cell membrane. H(+)-stimulated, divalent metal cation uptake system. Transports zinc and iron. Can also interact with manganese and copper. The sequence is that of Divalent metal cation transporter MntH from Mycobacterium tuberculosis (strain CDC 1551 / Oshkosh).